We begin with the raw amino-acid sequence, 600 residues long: Oligopeptide-binding protein OppA (600 aa).

A signal peptide spans 1–22 (MNKLKVTLLASSVVLAATLLSA). The N-palmitoyl cysteine moiety is linked to residue C23. C23 carries the S-diacylglycerol cysteine lipid modification.

The protein belongs to the bacterial solute-binding protein 5 family. In terms of assembly, the complex is composed of two ATP-binding proteins (OppD and OppF), two transmembrane proteins (OppB and OppC) and a solute-binding protein (OppA).

The protein localises to the cell membrane. Part of the ABC transporter complex OppABCDF involved in the uptake of oligopeptides. The chain is Oligopeptide-binding protein OppA from Lactococcus lactis subsp. cremoris (strain SK11).